We begin with the raw amino-acid sequence, 464 residues long: UNC93-like protein 3 (464 aa).

A run of 11 helical transmembrane segments spans residues 31 to 51, 62 to 82, 84 to 104, 110 to 130, 160 to 180, 192 to 212, 251 to 271, 275 to 295, 313 to 333, 341 to 361, and 392 to 412; these read VHIL…AQNL, ISLG…SLVV, LMGS…FVAA, WFTM…IWVG, EFWA…LALL, TLLM…MFFI, LLIV…WAEF, IVTP…YGAL, ITFI…WLLL, VLGT…DGIL, and IAIV…IVML.

This sequence belongs to the unc-93 family.

Its subcellular location is the membrane. The polypeptide is UNC93-like protein 3 (Arabidopsis thaliana (Mouse-ear cress)).